Consider the following 369-residue polypeptide: 5-amino-6-(D-ribitylamino)uracil--L-tyrosine 4-hydroxyphenyl transferase (369 aa).

One can recognise a Radical SAM core domain in the interval 56 to 292 (VTFVVNRNIN…AVARLYFGPL (237 aa)). Residues C70, C74, and C77 each contribute to the [4Fe-4S] cluster site.

This sequence belongs to the radical SAM superfamily. CofH family. In terms of assembly, consists of two subunits, CofG and CofH. The cofactor is [4Fe-4S] cluster.

The enzyme catalyses 5-amino-6-(D-ribitylamino)uracil + L-tyrosine + S-adenosyl-L-methionine = 5-amino-5-(4-hydroxybenzyl)-6-(D-ribitylimino)-5,6-dihydrouracil + 2-iminoacetate + 5'-deoxyadenosine + L-methionine + H(+). The protein operates within cofactor biosynthesis; coenzyme F0 biosynthesis. In terms of biological role, catalyzes the radical-mediated synthesis of 5-amino-5-(4-hydroxybenzyl)-6-(D-ribitylimino)-5,6-dihydrouracil from 5-amino-6-(D-ribitylamino)uracil and L-tyrosine. This is 5-amino-6-(D-ribitylamino)uracil--L-tyrosine 4-hydroxyphenyl transferase from Methanopyrus kandleri (strain AV19 / DSM 6324 / JCM 9639 / NBRC 100938).